Consider the following 317-residue polypeptide: MTLDHQILNQSFKRSHPPTPSSELLVQHGHPSPESDTGLTGNPLTRLLTLGKEDDNTEWHVSGSILDVYSGEQEISPVNMGLTSASCPSSLPMKREITETDTRALAKERQKKDNHNLIERRRRYNINYRIKELGTLIPKSNDPDMRWNKGTILKASVEYIKWLQKEQQRAQELEHRQKKLEQANRRLLLRIQELEIQARAHGLPTLASLVTVDLGAHITKQTHLEQNSGDYCQQLVLSQGTSPELCDQAMAFSDPLSHFTDLSFSAALKEEQRLDNMLLDDTVSPFGTDPLLSAISPAVSKESSRRSSFSSEDGDEL.

The segment at 1–44 is disordered; the sequence is MTLDHQILNQSFKRSHPPTPSSELLVQHGHPSPESDTGLTGNPL. Residues 1–90 are necessary for transcriptional transactivation; that stretch reads MTLDHQILNQ…GLTSASCPSS (90 aa). The segment covering 34-43 has biased composition (polar residues); it reads ESDTGLTGNP. Residues 110-163 form the bHLH domain; that stretch reads QKKDNHNLIERRRRYNINYRIKELGTLIPKSNDPDMRWNKGTILKASVEYIKWL. The tract at residues 241–317 is necessary for transcriptional transactivation; it reads TSPELCDQAM…SFSSEDGDEL (77 aa). Residues 297–317 are disordered; the sequence is PAVSKESSRRSSFSSEDGDEL.

This sequence belongs to the MiT/TFE family. As to quaternary structure, homodimer. Forms heterodimers with MITF and TFE3. Interacts with MITF.

The protein localises to the nucleus. Transcriptional regulator that acts as a repressor or an activator. Acts as a transcriptional repressor on minimal promoter containing element F (that includes an E-box sequence). Binds to element F in an E-box sequence-specific manner. Acts as a transcriptional transactivator on the proximal promoter region of the tartrate-resistant acid phosphatase (TRAP) E-box containing promoter. Collaborates with MITF in target gene activation. Acts as a transcriptional repressor on minimal promoter containing mu E3 enhancer sequence. Binds to mu E3 DNA sequence of the immunoglobulin heavy-chain gene enhancer. Binds DNA in a homo- or heterodimeric form. The chain is Transcription factor EC (TFEC) from Bos taurus (Bovine).